We begin with the raw amino-acid sequence, 674 residues long: Protein tesmin/TSO1-like CXC 2 (674 aa).

2 stretches are compositionally biased toward polar residues: residues 1–16 (MDTP…TPIS) and 76–89 (THNS…NSVE). 2 disordered regions span residues 1-20 (MDTP…KSRF) and 69-113 (KESR…GLNI). Over residues 95 to 109 (STSHEEVPAEGEDTK) the composition is skewed to basic and acidic residues. Residues 373–498 (SCKRCNCKKS…RCEGCKNAFG (126 aa)) form the CRC domain. Disordered stretches follow at residues 504–529 (SIDM…SQQN) and 623–655 (IPNI…RRNG). Over residues 507–516 (MEAEQEEENE) the composition is skewed to acidic residues.

It belongs to the lin-54 family. Ubiquitous but expressed mostly in all the aerial organs with highest expression in flowers.

The protein resides in the nucleus. Plays a role in development of both male and female reproductive tissues. This is Protein tesmin/TSO1-like CXC 2 (TCX2) from Arabidopsis thaliana (Mouse-ear cress).